Consider the following 525-residue polypeptide: Light-independent protochlorophyllide reductase subunit B (525 aa).

Aspartate 36 contributes to the [4Fe-4S] cluster binding site. Residue aspartate 292 is the Proton donor of the active site. 428–429 contacts substrate; sequence GL. The disordered stretch occupies residues 447–470; it reads PSASSENGSAPLSAGTATPAAAPE. A compositionally biased stretch (low complexity) spans 460–470; the sequence is AGTATPAAAPE.

The protein belongs to the ChlB/BchB/BchZ family. Protochlorophyllide reductase is composed of three subunits; BchL, BchN and BchB. Forms a heterotetramer of two BchB and two BchN subunits. [4Fe-4S] cluster is required as a cofactor.

The catalysed reaction is chlorophyllide a + oxidized 2[4Fe-4S]-[ferredoxin] + 2 ADP + 2 phosphate = protochlorophyllide a + reduced 2[4Fe-4S]-[ferredoxin] + 2 ATP + 2 H2O. It functions in the pathway porphyrin-containing compound metabolism; bacteriochlorophyll biosynthesis (light-independent). In terms of biological role, component of the dark-operative protochlorophyllide reductase (DPOR) that uses Mg-ATP and reduced ferredoxin to reduce ring D of protochlorophyllide (Pchlide) to form chlorophyllide a (Chlide). This reaction is light-independent. The NB-protein (BchN-BchB) is the catalytic component of the complex. The polypeptide is Light-independent protochlorophyllide reductase subunit B (Chlorobium luteolum (strain DSM 273 / BCRC 81028 / 2530) (Pelodictyon luteolum)).